A 526-amino-acid polypeptide reads, in one-letter code: Peptide chain release factor 3 (526 aa).

One can recognise a tr-type G domain in the interval 8–277 (GKRRTFAIIS…GLTDWAPAPQ (270 aa)). GTP-binding positions include 17 to 24 (SHPDAGKT), 85 to 89 (DTPGH), and 139 to 142 (NKLD).

This sequence belongs to the TRAFAC class translation factor GTPase superfamily. Classic translation factor GTPase family. PrfC subfamily.

It localises to the cytoplasm. In terms of biological role, increases the formation of ribosomal termination complexes and stimulates activities of RF-1 and RF-2. It binds guanine nucleotides and has strong preference for UGA stop codons. It may interact directly with the ribosome. The stimulation of RF-1 and RF-2 is significantly reduced by GTP and GDP, but not by GMP. The protein is Peptide chain release factor 3 of Aliivibrio fischeri (strain ATCC 700601 / ES114) (Vibrio fischeri).